Consider the following 155-residue polypeptide: Small ribosomal subunit protein uS7cz/uS7cy (155 aa).

This sequence belongs to the universal ribosomal protein uS7 family. In terms of assembly, part of the 30S ribosomal subunit.

It localises to the plastid. It is found in the chloroplast. Its function is as follows. One of the primary rRNA binding proteins, it binds directly to 16S rRNA where it nucleates assembly of the head domain of the 30S subunit. This chain is Small ribosomal subunit protein uS7cz/uS7cy (rps7-A), found in Eucalyptus globulus subsp. globulus (Tasmanian blue gum).